Reading from the N-terminus, the 119-residue chain is Cysteine-rich DPF motif domain-containing protein 1 (119 aa).

It belongs to the CDPF1 family.

This Mus musculus (Mouse) protein is Cysteine-rich DPF motif domain-containing protein 1 (Cdpf1).